The chain runs to 570 residues: Formate--tetrahydrofolate ligase (570 aa).

Position 65-72 (65-72) interacts with ATP; that stretch reads TPHGEGKT.

It belongs to the formate--tetrahydrofolate ligase family.

The enzyme catalyses (6S)-5,6,7,8-tetrahydrofolate + formate + ATP = (6R)-10-formyltetrahydrofolate + ADP + phosphate. Its pathway is one-carbon metabolism; tetrahydrofolate interconversion. This Shewanella oneidensis (strain ATCC 700550 / JCM 31522 / CIP 106686 / LMG 19005 / NCIMB 14063 / MR-1) protein is Formate--tetrahydrofolate ligase.